The primary structure comprises 1087 residues: 2'-5'-oligoadenylate synthase 3 (1087 aa).

An N-acetylmethionine modification is found at M1. The interval 6–343 (TPAAALDRFV…GDPVQSWKGP (338 aa)) is OAS domain 1. Interaction with dsRNA stretches follow at residues 12-57 (DRFV…VLKT) and 186-200 (ELRR…AKLK). Positions 344 to 410 (GLPRAGCSGL…VPGMALDLSQ (67 aa)) are linker. A Phosphothreonine modification is found at T365. OAS domain regions lie at residues 411–742 (IPTK…PWDV) and 750–1084 (TPAG…WPVK). S804 lines the ATP pocket. Mg(2+) is bound by residues D816, D818, and D888. The ATP site is built by R947, K950, and Q969.

This sequence belongs to the 2-5A synthase family. In terms of assembly, monomer. Mg(2+) is required as a cofactor. Present at high level in placenta trophoblast.

It localises to the cytoplasm. Its subcellular location is the nucleus. It carries out the reaction 3 ATP = 5'-triphosphoadenylyl-(2'-&gt;5')-adenylyl-(2'-&gt;5')-adenosine + 2 diphosphate. With respect to regulation, produced as a latent enzyme which is activated by dsRNA generated during the course of viral infection. Strongly activated by long dsRNAs at least 50 nucleotides in length. ssRNA does not activate the enzyme. Functionally, interferon-induced, dsRNA-activated antiviral enzyme which plays a critical role in cellular innate antiviral response. In addition, it may also play a role in other cellular processes such as apoptosis, cell growth, differentiation and gene regulation. Synthesizes preferentially dimers of 2'-5'-oligoadenylates (2-5A) from ATP which then bind to the inactive monomeric form of ribonuclease L (RNase L) leading to its dimerization and subsequent activation. Activation of RNase L leads to degradation of cellular as well as viral RNA, resulting in the inhibition of protein synthesis, thus terminating viral replication. Can mediate the antiviral effect via the classical RNase L-dependent pathway or an alternative antiviral pathway independent of RNase L. Displays antiviral activity against Chikungunya virus (CHIKV), Dengue virus, Sindbis virus (SINV) and Semliki forest virus (SFV). This is 2'-5'-oligoadenylate synthase 3 (OAS3) from Homo sapiens (Human).